A 446-amino-acid chain; its full sequence is MQKKIYIKTFGCQMNEYDSDKMVDVLNASEGLIKTDTPEDADVILLNTCSVREKAQEKVFSDLGRLRELKFNNPDLVIGVGGCVASQEGDAIVKRAPYVDLVFGPQTLHRLPEMLKQRRSTGRSQVDISFPEIEKFDHMPPAKVEGATAFVSIMEGCSKYCSYCVVPYTRGEEVSRRFEDVLAEVAGLEAQGVKEITLLGQNVNAYRGEMADGEIADFALLIEYIAELEGIERIRFVTSHPKEFTQRLIDAYAKVPKLVNHLYLPAQHGSDRILAAMKRGYTSLEYKSILRRLREVRPNISISSDFIVGFPGETDADFEAMMKLINDIGYDNSFSFIFSPRPGTPAANLEDDTPHEVKLQRLQRLQAVIDQNTRRYSDEMVGTVQRILVEGPSKKDPDELQGRTENNRVVNFAAGEHGARLIGQMVDVNIVQSFAYTLRGEIIVKQ.

Residues 3–120 (KKIYIKTFGC…LPEMLKQRRS (118 aa)) enclose the MTTase N-terminal domain. The [4Fe-4S] cluster site is built by Cys-12, Cys-49, Cys-83, Cys-157, Cys-161, and Cys-164. In terms of domain architecture, Radical SAM core spans 143–375 (KVEGATAFVS…QAVIDQNTRR (233 aa)). In terms of domain architecture, TRAM spans 378-444 (DEMVGTVQRI…AYTLRGEIIV (67 aa)).

The protein belongs to the methylthiotransferase family. MiaB subfamily. As to quaternary structure, monomer. It depends on [4Fe-4S] cluster as a cofactor.

The protein resides in the cytoplasm. It carries out the reaction N(6)-dimethylallyladenosine(37) in tRNA + (sulfur carrier)-SH + AH2 + 2 S-adenosyl-L-methionine = 2-methylsulfanyl-N(6)-dimethylallyladenosine(37) in tRNA + (sulfur carrier)-H + 5'-deoxyadenosine + L-methionine + A + S-adenosyl-L-homocysteine + 2 H(+). Its function is as follows. Catalyzes the methylthiolation of N6-(dimethylallyl)adenosine (i(6)A), leading to the formation of 2-methylthio-N6-(dimethylallyl)adenosine (ms(2)i(6)A) at position 37 in tRNAs that read codons beginning with uridine. The chain is tRNA-2-methylthio-N(6)-dimethylallyladenosine synthase from Janthinobacterium sp. (strain Marseille) (Minibacterium massiliensis).